The following is a 122-amino-acid chain: Large ribosomal subunit protein uL18 (122 aa).

This sequence belongs to the universal ribosomal protein uL18 family. In terms of assembly, part of the 50S ribosomal subunit; part of the 5S rRNA/L5/L18/L25 subcomplex. Contacts the 5S and 23S rRNAs.

Functionally, this is one of the proteins that bind and probably mediate the attachment of the 5S RNA into the large ribosomal subunit, where it forms part of the central protuberance. The chain is Large ribosomal subunit protein uL18 from Citrifermentans bemidjiense (strain ATCC BAA-1014 / DSM 16622 / JCM 12645 / Bem) (Geobacter bemidjiensis).